Reading from the N-terminus, the 73-residue chain is Homeodomain-only protein (73 aa).

The homeobox; degenerate DNA-binding region spans Ala-3–Glu-62.

Interacts with serum response factor (SRF). Component of a large complex containing histone deacetylases such as HDAC2. Interacts with the acetylated forms of HSPA1A and HSPA1B. Interacts with HSPA8. Widely expressed. Expressed in the heart, brain, placenta, lung, skeletal and smooth muscles, uterus, urinary bladder, kidney and spleen. Down-regulated in some types of cancer such as lung cancer, choriocarcinoma, head and neck squamous cell carcinoma and oral squamous cell carcinoma.

The protein localises to the nucleus. The protein resides in the cytoplasm. Functionally, atypical homeodomain protein which does not bind DNA and is required to modulate cardiac growth and development. Acts via its interaction with SRF, thereby modulating the expression of SRF-dependent cardiac-specific genes and cardiac development. Prevents SRF-dependent transcription either by inhibiting SRF binding to DNA or by recruiting histone deacetylase (HDAC) proteins that prevent transcription by SRF. Overexpression causes cardiac hypertrophy. May act as a tumor suppressor. Acts as a co-chaperone for HSPA1A and HSPA1B chaperone proteins and assists in chaperone-mediated protein refolding. The protein is Homeodomain-only protein (HOPX) of Homo sapiens (Human).